Here is a 232-residue protein sequence, read N- to C-terminus: Ribose-5-phosphate isomerase A (232 aa).

Substrate-binding positions include 31-34 (TGST), 87-90 (DGAD), and 100-103 (KGGG). Residue Glu-109 is the Proton acceptor of the active site. Residue Lys-127 coordinates substrate.

The protein belongs to the ribose 5-phosphate isomerase family. Homodimer.

The enzyme catalyses aldehydo-D-ribose 5-phosphate = D-ribulose 5-phosphate. The protein operates within carbohydrate degradation; pentose phosphate pathway; D-ribose 5-phosphate from D-ribulose 5-phosphate (non-oxidative stage): step 1/1. Functionally, catalyzes the reversible conversion of ribose-5-phosphate to ribulose 5-phosphate. The sequence is that of Ribose-5-phosphate isomerase A from Bifidobacterium longum subsp. infantis (strain ATCC 15697 / DSM 20088 / JCM 1222 / NCTC 11817 / S12).